A 224-amino-acid chain; its full sequence is NADH-quinone oxidoreductase subunit B (224 aa).

C67, C68, C133, and C162 together coordinate [4Fe-4S] cluster. Positions 200-224 are disordered; the sequence is DMPAEKDRKRGERIKVTNLRTPDEI. Residues 201-224 show a composition bias toward basic and acidic residues; the sequence is MPAEKDRKRGERIKVTNLRTPDEI.

Belongs to the complex I 20 kDa subunit family. In terms of assembly, NDH-1 is composed of 14 different subunits. Subunits NuoB, C, D, E, F, and G constitute the peripheral sector of the complex. [4Fe-4S] cluster serves as cofactor.

The protein resides in the cell inner membrane. It catalyses the reaction a quinone + NADH + 5 H(+)(in) = a quinol + NAD(+) + 4 H(+)(out). Its function is as follows. NDH-1 shuttles electrons from NADH, via FMN and iron-sulfur (Fe-S) centers, to quinones in the respiratory chain. The immediate electron acceptor for the enzyme in this species is believed to be ubiquinone. Couples the redox reaction to proton translocation (for every two electrons transferred, four hydrogen ions are translocated across the cytoplasmic membrane), and thus conserves the redox energy in a proton gradient. The polypeptide is NADH-quinone oxidoreductase subunit B (Aeromonas salmonicida (strain A449)).